Consider the following 260-residue polypeptide: Ava biosynthesis cluster protein M (260 aa).

The first 15 residues, 1–15 (MKVLVLGLCRTGTSS), serve as a signal peptide directing secretion.

Belongs to the cytochrome P450 family.

The protein operates within secondary metabolite biosynthesis. Part of the cluster that mediates the biosynthesis of a highly modified cyclo-arginine-tryptophan dipeptide (cRW). The first step of the pathway is perfornmed by the arginine-containing cyclodipeptide synthase (RCPDS) avaA that acts as the scaffold-generating enzyme and is responsible for formation of the cyclo-Arg-Trp (cRW) diketopiperazine. AvaB then acts as a multifunctional flavoenzyme that is responsible for generating the cyclo-Arg-formylkynurenine DKP, which can be deformylated by avaC. AvaB then further catalyzes an additional N-oxidation followed by cyclization and dehydration. The next step is an N-acetylation of the guanidine group catalyzed by the arginine N-acetyltransferase avaD. The roles of the additional enzymes identified within the ava cluster still have to be determined. This Aspergillus versicolor protein is Ava biosynthesis cluster protein M.